Reading from the N-terminus, the 174-residue chain is RNA pyrophosphohydrolase (174 aa).

A Nudix hydrolase domain is found at 6-149 (GFRANVGIII…KRDVYRKVMK (144 aa)). Positions 38-59 (GGVDDGETAEEAMYRELYEEVG) match the Nudix box motif.

It belongs to the Nudix hydrolase family. RppH subfamily. A divalent metal cation serves as cofactor.

In terms of biological role, accelerates the degradation of transcripts by removing pyrophosphate from the 5'-end of triphosphorylated RNA, leading to a more labile monophosphorylated state that can stimulate subsequent ribonuclease cleavage. The polypeptide is RNA pyrophosphohydrolase (Shewanella sp. (strain MR-7)).